The chain runs to 326 residues: Thioredoxin reductase (326 aa).

Residue 40-47 (TGNNKGGQ) participates in FAD binding. An intrachain disulfide couples Cys141 to Cys144. 291 to 300 (DVIDHVYKQA) serves as a coordination point for FAD.

It belongs to the class-II pyridine nucleotide-disulfide oxidoreductase family. In terms of assembly, homodimer. FAD is required as a cofactor.

The protein resides in the cytoplasm. The catalysed reaction is [thioredoxin]-dithiol + NADP(+) = [thioredoxin]-disulfide + NADPH + H(+). The sequence is that of Thioredoxin reductase (trxB) from Buchnera aphidicola subsp. Baizongia pistaciae (strain Bp).